The chain runs to 456 residues: TGACG-sequence-specific DNA-binding protein TGA-2.1 (456 aa).

2 disordered regions span residues 1-41 and 115-170; these read MASK…NTSR and SASG…QKTL. Composition is skewed to polar residues over residues 9 to 41 and 125 to 141; these read GNRS…NTSR and GESN…TSTD. Residues 158 to 169 are compositionally biased toward basic and acidic residues; the sequence is DKSKEKVLDQKT. Positions 166–229 constitute a bZIP domain; the sequence is DQKTLRRLAQ…NIADQSNGVG (64 aa). Positions 167 to 220 form a coiled coil; that stretch reads QKTLRRLAQNREAARKSRLRKKAYVQQLENSRLKLSQLEQDLQRARQQGKYISN. The basic motif stretch occupies residues 168–188; the sequence is KTLRRLAQNREAARKSRLRKK. Residues 194-208 are leucine-zipper; sequence LENSRLKLSQLEQDL. In terms of domain architecture, DOG1 spans 233–450; that stretch reads PLAFDAEYSR…RALSSLWLAR (218 aa).

The protein belongs to the bZIP family. As to quaternary structure, can form heterodimer with TGA2.2.

The protein localises to the nucleus. Transcriptional activator that binds specifically to the DNA sequence 5'-TGACG-3'. Recognizes ocs elements like the as-1 motif of the cauliflower mosaic virus 35S promoter. Binding to the as-1-like cis elements mediate auxin- and salicylic acid-inducible transcription. The protein is TGACG-sequence-specific DNA-binding protein TGA-2.1 (TGA21) of Nicotiana tabacum (Common tobacco).